The sequence spans 156 residues: Putative pre-16S rRNA nuclease (156 aa).

Belongs to the YqgF nuclease family.

The protein resides in the cytoplasm. Its function is as follows. Could be a nuclease involved in processing of the 5'-end of pre-16S rRNA. The chain is Putative pre-16S rRNA nuclease from Nocardioides sp. (strain ATCC BAA-499 / JS614).